The following is a 389-amino-acid chain: Chalcone synthase E (389 aa).

Cys-164 is a catalytic residue.

It belongs to the thiolase-like superfamily. Chalcone/stilbene synthases family.

The catalysed reaction is (E)-4-coumaroyl-CoA + 3 malonyl-CoA + 3 H(+) = 2',4,4',6'-tetrahydroxychalcone + 3 CO2 + 4 CoA. The protein operates within secondary metabolite biosynthesis; flavonoid biosynthesis. The primary product of this enzyme is 4,2',4',6'-tetrahydroxychalcone (also termed naringenin-chalcone or chalcone) which can under specific conditions spontaneously isomerize into naringenin. This Ipomoea purpurea (Common morning glory) protein is Chalcone synthase E (CHSE).